A 393-amino-acid polypeptide reads, in one-letter code: Protein DDI1 homolog 2 (393 aa).

The 81-residue stretch at methionine 1–glutamate 81 folds into the Ubiquitin-like domain. The tract at residues threonine 82 to aspartate 127 is disordered. The segment covering proline 107–aspartate 118 has biased composition (pro residues). The active site involves aspartate 246. Positions glutamate 370–aspartate 389 match the Ubiquitin-binding motif.

Belongs to the DDI1 family. As to quaternary structure, homodimer.

Its subcellular location is the cytoplasm. The protein resides in the cytosol. It localises to the chromosome. Its function is as follows. Aspartic protease that mediates the cleavage of NFE2L1/NRF1 at 'Leu-104', thereby promoting release of NFE2L1/NRF1 from the endoplasmic reticulum membrane. Ubiquitination of NFE2L1/NRF1 is a prerequisite for cleavage, suggesting that DDI2 specifically recognizes and binds ubiquitinated NFE2L1/NRF1. Seems to act as a proteasomal shuttle which links the proteasome and replication fork proteins like RTF2. Required for cellular survival following replication stress. This is Protein DDI1 homolog 2 (ddi2) from Xenopus laevis (African clawed frog).